Reading from the N-terminus, the 368-residue chain is Transcription factor bHLH30 (368 aa).

Residues 3 to 30 are a coiled coil; that stretch reads AKKEEEEEEEEDSSEAMNNIQNYQNDLF. Positions 173–222 constitute a bHLH domain; that stretch reads AASKSHSEAERRRRERINNHLAKLRSILPNTTKTDKASLLAEVIQHVKEL. Residues 333–368 are disordered; sequence KSNVEESSSSGNAKRQRMSSHNTITIVEQQQQYNQR. The span at 337-368 shows a compositional bias: polar residues; sequence EESSSSGNAKRQRMSSHNTITIVEQQQQYNQR.

As to quaternary structure, homodimer. Interacts with LHW.

Its subcellular location is the nucleus. The sequence is that of Transcription factor bHLH30 (BHLH30) from Arabidopsis thaliana (Mouse-ear cress).